Reading from the N-terminus, the 213-residue chain is Proteasome subunit beta (213 aa).

Residues 1 to 11 (MPEQYQESMTG) constitute a propeptide, removed in mature form; by autocatalysis. The active-site Nucleophile is the Thr-12.

This sequence belongs to the peptidase T1B family. In terms of assembly, the 20S proteasome core is composed of 14 alpha and 14 beta subunits that assemble into four stacked heptameric rings, resulting in a barrel-shaped structure. The two inner rings, each composed of seven catalytic beta subunits, are sandwiched by two outer rings, each composed of seven alpha subunits. The catalytic chamber with the active sites is on the inside of the barrel. Has a gated structure, the ends of the cylinder being occluded by the N-termini of the alpha-subunits. Is capped at one or both ends by the proteasome regulatory ATPase, PAN.

Its subcellular location is the cytoplasm. It carries out the reaction Cleavage of peptide bonds with very broad specificity.. The formation of the proteasomal ATPase PAN-20S proteasome complex, via the docking of the C-termini of PAN into the intersubunit pockets in the alpha-rings, triggers opening of the gate for substrate entry. Interconversion between the open-gate and close-gate conformations leads to a dynamic regulation of the 20S proteasome proteolysis activity. Its function is as follows. Component of the proteasome core, a large protease complex with broad specificity involved in protein degradation. The protein is Proteasome subunit beta of Methanoregula boonei (strain DSM 21154 / JCM 14090 / 6A8).